A 332-amino-acid chain; its full sequence is Tryptophan--tRNA ligase (332 aa).

Residues 11-13 and 19-20 contribute to the ATP site; these read TST and GN. The 'HIGH' region signature appears at 12 to 20; sequence STGKLTLGN. D140 serves as a coordination point for L-tryptophan. Residues 152–154, I191, and 200–204 each bind ATP; these read GQD and KMSKS. The short motif at 200 to 204 is the 'KMSKS' region element; sequence KMSKS.

Belongs to the class-I aminoacyl-tRNA synthetase family. As to quaternary structure, homodimer.

Its subcellular location is the cytoplasm. It carries out the reaction tRNA(Trp) + L-tryptophan + ATP = L-tryptophyl-tRNA(Trp) + AMP + diphosphate + H(+). Functionally, catalyzes the attachment of tryptophan to tRNA(Trp). This Mycoplasmopsis pulmonis (strain UAB CTIP) (Mycoplasma pulmonis) protein is Tryptophan--tRNA ligase.